Consider the following 378-residue polypeptide: GDP-mannose 3,5-epimerase 1 (378 aa).

NAD(+)-binding positions include 36–62, Asp60, and Asp80; that span reads GAGG…SDWK. Substrate contacts are provided by residues Gly105 and 145 to 147; that span reads SAC. The NAD(+) site is built by Tyr175 and Lys179. Residue Tyr175 is the Proton acceptor of the active site. Residues Asn204, 217 to 219, Lys226, 242 to 244, Arg307, and Ser357 each bind substrate; these read EKA and QTR.

This sequence belongs to the NAD(P)-dependent epimerase/dehydratase family. In terms of assembly, homodimer. The cofactor is NAD(+).

The enzyme catalyses GDP-alpha-D-mannose = GDP-beta-L-gulose. It carries out the reaction GDP-beta-L-gulose = GDP-beta-L-galactose. The protein operates within cofactor biosynthesis; L-ascorbate biosynthesis via GDP-alpha-D-mannose pathway; L-ascorbate from GDP-alpha-D-mannose: step 1/5. With respect to regulation, strongly activated by NAD. Activated by NADP. Slightly activated by NADH and NADPH. Inhibited by GDP. Catalyzes a reversible epimerization of GDP-D-mannose that precedes the committed step in the biosynthesis of vitamin C (L-ascorbate), resulting in the hydrolysis of the highly energetic glycosyl-pyrophosphoryl linkage. Able to catalyze 2 distinct epimerization reactions and can release both GDP-L-galactose and GDP-L-gulose from GDP-mannose. The chain is GDP-mannose 3,5-epimerase 1 (GME-1) from Oryza sativa subsp. japonica (Rice).